The sequence spans 125 residues: Ribonuclease P protein component (125 aa).

It belongs to the RnpA family. In terms of assembly, consists of a catalytic RNA component (M1 or rnpB) and a protein subunit.

The enzyme catalyses Endonucleolytic cleavage of RNA, removing 5'-extranucleotides from tRNA precursor.. Functionally, RNaseP catalyzes the removal of the 5'-leader sequence from pre-tRNA to produce the mature 5'-terminus. It can also cleave other RNA substrates such as 4.5S RNA. The protein component plays an auxiliary but essential role in vivo by binding to the 5'-leader sequence and broadening the substrate specificity of the ribozyme. In Clostridium botulinum (strain Alaska E43 / Type E3), this protein is Ribonuclease P protein component.